The primary structure comprises 118 residues: NAD(P)H-quinone oxidoreductase subunit M (118 aa).

The protein belongs to the complex I NdhM subunit family. In terms of assembly, NDH-1 can be composed of about 15 different subunits; different subcomplexes with different compositions have been identified which probably have different functions.

Its subcellular location is the cellular thylakoid membrane. The enzyme catalyses a plastoquinone + NADH + (n+1) H(+)(in) = a plastoquinol + NAD(+) + n H(+)(out). The catalysed reaction is a plastoquinone + NADPH + (n+1) H(+)(in) = a plastoquinol + NADP(+) + n H(+)(out). NDH-1 shuttles electrons from an unknown electron donor, via FMN and iron-sulfur (Fe-S) centers, to quinones in the respiratory and/or the photosynthetic chain. The immediate electron acceptor for the enzyme in this species is believed to be plastoquinone. Couples the redox reaction to proton translocation, and thus conserves the redox energy in a proton gradient. Cyanobacterial NDH-1 also plays a role in inorganic carbon-concentration. The protein is NAD(P)H-quinone oxidoreductase subunit M of Trichormus variabilis (strain ATCC 29413 / PCC 7937) (Anabaena variabilis).